Reading from the N-terminus, the 526-residue chain is Peptide chain release factor 3 (526 aa).

A tr-type G domain is found at 8–277 (GKRRTFAIIS…GLTDWAPAPQ (270 aa)). GTP is bound by residues 17 to 24 (SHPDAGKT), 85 to 89 (DTPGH), and 139 to 142 (NKLD).

This sequence belongs to the TRAFAC class translation factor GTPase superfamily. Classic translation factor GTPase family. PrfC subfamily.

It localises to the cytoplasm. Functionally, increases the formation of ribosomal termination complexes and stimulates activities of RF-1 and RF-2. It binds guanine nucleotides and has strong preference for UGA stop codons. It may interact directly with the ribosome. The stimulation of RF-1 and RF-2 is significantly reduced by GTP and GDP, but not by GMP. The chain is Peptide chain release factor 3 from Aliivibrio fischeri (strain MJ11) (Vibrio fischeri).